The sequence spans 403 residues: Soluble calcium-activated nucleotidase 1 (403 aa).

Over 1-44 (MPIQPFDQREWNEPMHSLRISVGGLPVLASMTKATDPRFRPRWR) the chain is Cytoplasmic. A helical; Signal-anchor for type II membrane protein membrane pass occupies residues 45–61 (VILTSFVGAALLWLLYS). Topologically, residues 62–403 (HHQGPVPGRP…TVKYEGIEFI (342 aa)) are lumenal. An N-linked (GlcNAc...) asparagine glycan is attached at Asn-90. Ca(2+) is bound by residues Ser-170, Asp-171, Glu-217, Glu-286, Ser-347, and Glu-398.

This sequence belongs to the apyrase family. In terms of assembly, monomer. Homodimer; dimerization is Ca(2+)-dependent. Ca(2+) serves as cofactor.

Its subcellular location is the endoplasmic reticulum membrane. It is found in the golgi apparatus. It localises to the golgi stack membrane. It carries out the reaction a ribonucleoside 5'-diphosphate + H2O = a ribonucleoside 5'-phosphate + phosphate + H(+). Functionally, calcium-dependent nucleotidase with a preference for UDP. The order of activity with different substrates is UDP &gt; GDP &gt; IDP &gt;&gt; UTP &gt; CDP = GTP = ITP. Has very low activity towards ADP and even lower activity towards ATP. Does not hydrolyze AMP and GMP. Involved in proteoglycan synthesis. In Mus musculus (Mouse), this protein is Soluble calcium-activated nucleotidase 1 (Cant1).